We begin with the raw amino-acid sequence, 267 residues long: Undecaprenyl-diphosphatase (267 aa).

The next 8 membrane-spanning stretches (helical) occupy residues 1-21, 39-59, 83-103, 111-131, 149-169, 189-209, 218-238, and 246-266; these read MTYF…FLPI, QGLA…VIYF, SNLA…GLLF, LRSA…LWWV, ALFL…RSGI, FLMS…KLAM, LLST…HFFL, and MMPF…WLAL.

The protein belongs to the UppP family.

The protein resides in the cell inner membrane. It carries out the reaction di-trans,octa-cis-undecaprenyl diphosphate + H2O = di-trans,octa-cis-undecaprenyl phosphate + phosphate + H(+). In terms of biological role, catalyzes the dephosphorylation of undecaprenyl diphosphate (UPP). Confers resistance to bacitracin. The chain is Undecaprenyl-diphosphatase from Aliivibrio fischeri (strain ATCC 700601 / ES114) (Vibrio fischeri).